The chain runs to 1351 residues: MSFMGLPLAGQKHCPKSGQMEAMVMTCSLCHQDLPGMGSHLLSCQHLLRKDCFQGLIQELGQIAKAHETVADELISCPGCERVYLTRDVTEHFFLHCVPTEQPKMARNCSECKEKRAAHILCTYCNRWLCSSCTEEHRHSPVPGGPFFPRAQKGSPGVNGGPGDFTLYCPLHTQEVLKLFCETCDMLTCHSCLVVEHKEHRCRHVEEVLQNQRMLLEGVTTQVAHKKSSLQTSAKQIEDRIFEVKHQHRKVENQIKMAKMVLMNELNKQANGLIEELEGITNERKRKLEQQLQSIMVLNRQFEHVQNFINWAVCSKTSVPFLFSKELIVFQMQRLLETSCNTDPGSPWSIRFTWEPNFWTKQLASLGCITTEGGQMSRADAPAYGGLQGSSPFYQSHQSPVAQQEALSHPSHKFQSPAVCSSSVCCSHCSPVSPSLKGQVPPPSIHPAHSFRQPPEMVPQQLGSLQCSALLPREKELACSPHPPKLLQPWLETQPPVEQESTSQRLGQQLTSQPVCIVPPQDVQQGAHAQPTLQTPSIQVQFGHHQKLKLSHFQQQPQQQLPPPPPPLPHPPPPLPPPPQQPHPPLPPSQHLASSQHESPPGPACSQNMDIMHHKFELEEMQKDLELLLQAQQPSLQLSQTKSPQHLQQTIVGQINYIVRQPAPVQSQSQEETLQATDEPPASQGSKPALPLDKNTAAALPQASGEETPLSVPPVDSTIQHSSPNVVRKHSTSLSIMGFSNTLEMELSSTRLERPLEPQIQSVSNLTAGAPQAVPSLLSAPPKMVSSLTSVQNQAMPSLTTSHLQTVPSLVHSTFQSMPNLISDSPQAMASLASDHPQAGPSLMSGHTQAVPSLATCPLQSIPPVSDMQPETGSSSSSGRTSGSLCPRDGADPSLENALCKMESEDSTRFTDLLGQGPIVPGLDAPKDLAIPSELEEPINLSVKKPPLAPVVSTSTALQQYQNPKECENFEQGALELDAKENQSIRAFNSEHKIPYVRLERLKICAASSGEMPVFKLKPQKNDQDGSFLLIIECGTESSSMSIKVSQDRLSEATQAPGLEGRKVTVTSLAGQRPPEVEGTSPEEHRLIPRTPGAKKGPPAPIENEDFCAVCLNGGELLCCDRCPKVFHLSCHVPALLSFPGGEWVCTLCRSLTQPEMEYDCENACYNQPGMRASPGLSMYDQKKCEKLVLSLCCNNLSLPFHEPVSPLARHYYQIIKRPMDLSIIRRKLQKKDPAHYTTPEEVVSDVRLMFWNCAKFNYPDSEVAEAGRCLEVFFEGWLKEIYPEKRFAQPRQEDSDSEEVSSESGCSTPQGFPWPPYMQEGIQPKRRRRHMENERAKRMSFRLANSISQV.

The segment at 105–150 (MARNCSECKEKRAAHILCTYCNRWLCSSCTEEHRHSPVPGGPFFPR) adopts a B box-type 1; atypical zinc-finger fold. The Zn(2+) site is built by Cys109, Cys112, Cys133, His139, Cys169, His172, Cys192, and His197. A B box-type 2 zinc finger spans residues 164-205 (DFTLYCPLHTQEVLKLFCETCDMLTCHSCLVVEHKEHRCRHV). The stretch at 234–304 (AKQIEDRIFE…IMVLNRQFEH (71 aa)) forms a coiled coil. Disordered regions lie at residues 542-608 (FGHH…CSQN), 663-730 (APVQ…VRKH), and 857-895 (CPLQ…DPSL). Residues 560–588 (QLPPPPPPLPHPPPPLPPPPQQPHPPLPP) are compositionally biased toward pro residues. The span at 664–676 (PVQSQSQEETLQA) shows a compositional bias: polar residues. Residues 872 to 884 (TGSSSSSGRTSGS) show a composition bias toward low complexity. The PxVxL motif motif lies at 995 to 999 (PYVRL). Residues 1067-1098 (TSLAGQRPPEVEGTSPEEHRLIPRTPGAKKGP) are disordered. The PHD-type zinc finger occupies 1105-1152 (EDFCAVCLNGGELLCCDRCPKVFHLSCHVPALLSFPGGEWVCTLCRSL). The Bromo domain maps to 1176-1282 (GLSMYDQKKC…VFFEGWLKEI (107 aa)). A disordered region spans residues 1289 to 1351 (AQPRQEDSDS…FRLANSISQV (63 aa)).

As to quaternary structure, can form homodimers and heterodimers. Interacts with CBX5, CBX1 and CBX3 via PxVxL motif.

The protein localises to the nucleus. May function as transcription repressor; The repressive effects are mediated, at least in part, by recruitment of deacetylase activity. May play a role as negative regulator of postmeiotic genes acting through CBX3 complex formation and centromere association. This chain is Tripartite motif-containing protein 66 (TRIM66), found in Homo sapiens (Human).